The following is a 342-amino-acid chain: Succinylglutamate desuccinylase (342 aa).

Residues histidine 63, glutamate 66, and histidine 155 each contribute to the Zn(2+) site. Glutamate 219 is an active-site residue.

This sequence belongs to the AspA/AstE family. Succinylglutamate desuccinylase subfamily. It depends on Zn(2+) as a cofactor.

It carries out the reaction N-succinyl-L-glutamate + H2O = L-glutamate + succinate. It participates in amino-acid degradation; L-arginine degradation via AST pathway; L-glutamate and succinate from L-arginine: step 5/5. Transforms N(2)-succinylglutamate into succinate and glutamate. In Vibrio parahaemolyticus serotype O3:K6 (strain RIMD 2210633), this protein is Succinylglutamate desuccinylase.